Reading from the N-terminus, the 167-residue chain is Small ribosomal subunit protein uS5 (167 aa).

Positions 12-75 constitute an S5 DRBM domain; the sequence is LQEKLITVNR…EQARRNMITI (64 aa).

The protein belongs to the universal ribosomal protein uS5 family. As to quaternary structure, part of the 30S ribosomal subunit. Contacts proteins S4 and S8.

With S4 and S12 plays an important role in translational accuracy. Its function is as follows. Located at the back of the 30S subunit body where it stabilizes the conformation of the head with respect to the body. The sequence is that of Small ribosomal subunit protein uS5 from Buchnera aphidicola subsp. Acyrthosiphon pisum (strain APS) (Acyrthosiphon pisum symbiotic bacterium).